We begin with the raw amino-acid sequence, 133 residues long: UPF0292 protein TON_0187 (133 aa).

Residues 20–100 form the Toprim domain; it reads EGAIIVEGPR…RVDSETRKEL (81 aa). Mg(2+) contacts are provided by Glu-26, Asp-69, and Asp-71.

The protein belongs to the UPF0292 family. Requires Mg(2+) as cofactor.

This chain is UPF0292 protein TON_0187, found in Thermococcus onnurineus (strain NA1).